A 206-amino-acid polypeptide reads, in one-letter code: Small ribosomal subunit protein uS4 (206 aa).

The region spanning 96-156 (TRLDNVVYRM…EKSQKQARIK (61 aa)) is the S4 RNA-binding domain.

Belongs to the universal ribosomal protein uS4 family. Part of the 30S ribosomal subunit. Contacts protein S5. The interaction surface between S4 and S5 is involved in control of translational fidelity.

Its function is as follows. One of the primary rRNA binding proteins, it binds directly to 16S rRNA where it nucleates assembly of the body of the 30S subunit. Functionally, with S5 and S12 plays an important role in translational accuracy. This Shewanella loihica (strain ATCC BAA-1088 / PV-4) protein is Small ribosomal subunit protein uS4.